Here is a 439-residue protein sequence, read N- to C-terminus: Protein ABHD8 (439 aa).

Disordered stretches follow at residues 54–75 (HAGP…PGVK) and 122–148 (ELAE…RPKR). The span at 58–67 (APIPTPPPPP) shows a compositional bias: pro residues. The span at 138–148 (GRRRRPRRPKR) shows a compositional bias: basic residues. One can recognise an AB hydrolase-1 domain in the interval 169–271 (VLFFIHGVGG…HKVIMINGGG (103 aa)). Residues S244, D362, and H390 each act as charge relay system in the active site. The tract at residues 415 to 439 (EAEPKLEPKPKPQLLQPEPAPGEEK) is disordered.

Belongs to the AB hydrolase superfamily. In terms of assembly, interacts with NLRP3 (via NACHT and LLR domains); this interaction is enhanced in the presence of NLRP3 inflammasome inducers, such as ATP, nigericin, silica, or alum. Interacts with ZDHHC12.

The protein localises to the cytoplasm. Functionally, negatively regulates NLRP3-driven inflammation. Promotes NLRP3 degradation through the chaperone-mediated autophagy (CMA) pathway, hence attenuating inflammasome activation and IL1B secretion. Acts by recruiting palmitoyltransferase ZDHHC12 to NLRP3, facilitating NLRP3 palmitoylation and subsequent degradation. This Mus musculus (Mouse) protein is Protein ABHD8.